The following is a 290-amino-acid chain: 33 kDa chaperonin (290 aa).

Cystine bridges form between Cys-235/Cys-237 and Cys-268/Cys-271.

This sequence belongs to the HSP33 family. In terms of processing, under oxidizing conditions two disulfide bonds are formed involving the reactive cysteines. Under reducing conditions zinc is bound to the reactive cysteines and the protein is inactive.

The protein localises to the cytoplasm. Redox regulated molecular chaperone. Protects both thermally unfolding and oxidatively damaged proteins from irreversible aggregation. Plays an important role in the bacterial defense system toward oxidative stress. This Streptococcus pyogenes serotype M28 (strain MGAS6180) protein is 33 kDa chaperonin.